We begin with the raw amino-acid sequence, 888 residues long: Alanine--tRNA ligase (888 aa).

Zn(2+) contacts are provided by histidine 571, histidine 575, cysteine 674, and histidine 678.

Belongs to the class-II aminoacyl-tRNA synthetase family. The cofactor is Zn(2+).

The protein resides in the cytoplasm. The enzyme catalyses tRNA(Ala) + L-alanine + ATP = L-alanyl-tRNA(Ala) + AMP + diphosphate. Its function is as follows. Catalyzes the attachment of alanine to tRNA(Ala) in a two-step reaction: alanine is first activated by ATP to form Ala-AMP and then transferred to the acceptor end of tRNA(Ala). Also edits incorrectly charged Ser-tRNA(Ala) and Gly-tRNA(Ala) via its editing domain. This is Alanine--tRNA ligase from Nocardia farcinica (strain IFM 10152).